The primary structure comprises 97 residues: MSRACELTGKTVQYGNNVSHANNKTRRRFLPNLCNVTLISEVLQQSYRLRVSASALRSVEHRGGLDGFLVKADDKELSQRARLLKRQIVKKKAEKAA.

The protein belongs to the bacterial ribosomal protein bL28 family.

This Bartonella henselae (strain ATCC 49882 / DSM 28221 / CCUG 30454 / Houston 1) (Rochalimaea henselae) protein is Large ribosomal subunit protein bL28.